Consider the following 196-residue polypeptide: Probable malonic semialdehyde reductase RutE (196 aa).

Belongs to the nitroreductase family. HadB/RutE subfamily. Requires FMN as cofactor.

It catalyses the reaction 3-hydroxypropanoate + NADP(+) = 3-oxopropanoate + NADPH + H(+). May reduce toxic product malonic semialdehyde to 3-hydroxypropionic acid, which is excreted. This chain is Probable malonic semialdehyde reductase RutE, found in Shigella sonnei (strain Ss046).